A 29-amino-acid chain; its full sequence is Glucagon (29 aa).

Belongs to the glucagon family.

The protein localises to the secreted. Its function is as follows. Glucagon plays a key role in glucose metabolism and homeostasis. Regulates blood glucose by increasing gluconeogenesis and decreasing glycolysis. The sequence is that of Glucagon (GCG) from Struthio camelus (Common ostrich).